The sequence spans 350 residues: Nicotinate-nucleotide--dimethylbenzimidazole phosphoribosyltransferase (350 aa).

The Proton acceptor role is filled by Glu-317.

This sequence belongs to the CobT family.

The enzyme catalyses 5,6-dimethylbenzimidazole + nicotinate beta-D-ribonucleotide = alpha-ribazole 5'-phosphate + nicotinate + H(+). It participates in nucleoside biosynthesis; alpha-ribazole biosynthesis; alpha-ribazole from 5,6-dimethylbenzimidazole: step 1/2. In terms of biological role, catalyzes the synthesis of alpha-ribazole-5'-phosphate from nicotinate mononucleotide (NAMN) and 5,6-dimethylbenzimidazole (DMB). In Shewanella sp. (strain MR-4), this protein is Nicotinate-nucleotide--dimethylbenzimidazole phosphoribosyltransferase.